The sequence spans 907 residues: Leucine--tRNA ligase (907 aa).

Positions proline 42 to histidine 52 match the 'HIGH' region motif. The short motif at threonine 651–serine 655 is the 'KMSKS' region element. Lysine 654 is an ATP binding site.

This sequence belongs to the class-I aminoacyl-tRNA synthetase family.

It is found in the cytoplasm. It catalyses the reaction tRNA(Leu) + L-leucine + ATP = L-leucyl-tRNA(Leu) + AMP + diphosphate. The protein is Leucine--tRNA ligase of Verminephrobacter eiseniae (strain EF01-2).